Reading from the N-terminus, the 388-residue chain is S-adenosylmethionine synthase (388 aa).

Residue His16 coordinates ATP. Asp18 is a binding site for Mg(2+). Glu44 is a binding site for K(+). L-methionine-binding residues include Glu57 and Gln100. A flexible loop region spans residues 100-110 (QSPDIAQGVDK). ATP contacts are provided by residues 167-169 (DAK), 233-234 (RF), Asp242, 248-249 (RK), Ala265, and Lys269. Asp242 lines the L-methionine pocket. Lys273 contributes to the L-methionine binding site.

This sequence belongs to the AdoMet synthase family. Homotetramer; dimer of dimers. Mg(2+) is required as a cofactor. The cofactor is K(+).

The protein resides in the cytoplasm. The catalysed reaction is L-methionine + ATP + H2O = S-adenosyl-L-methionine + phosphate + diphosphate. Its pathway is amino-acid biosynthesis; S-adenosyl-L-methionine biosynthesis; S-adenosyl-L-methionine from L-methionine: step 1/1. Functionally, catalyzes the formation of S-adenosylmethionine (AdoMet) from methionine and ATP. The overall synthetic reaction is composed of two sequential steps, AdoMet formation and the subsequent tripolyphosphate hydrolysis which occurs prior to release of AdoMet from the enzyme. The chain is S-adenosylmethionine synthase from Polynucleobacter asymbioticus (strain DSM 18221 / CIP 109841 / QLW-P1DMWA-1) (Polynucleobacter necessarius subsp. asymbioticus).